The sequence spans 462 residues: MTKELLRALPKIDEILGIFNEDFLNENGRETVVSALRDIINENRKAILNEEVDYALTKEEAKSKCEHRLLKKRERNLKRVINGTGVVIHTNLGRSLLSKEATEAVALAASSYSNLEYDLEKGERGSRYSLIEGIIKDITGAEAALVVNNNAAAIMLVLNSLCENKEVIVSRGELVEIGGSFRIPEVMNFSRAKLVEVGTTNRTHLYDYEDAITEETGAFLKVHSSNFKIVGFTKSVSANEICNLAREKDIPVIEDIGSGVLIDLSKYGLEKEPTVIESLEDGVDVVTFSGDKMLGGAQAGIIVGKKKFIDKIKRNQLTRALRVDKFTLAALEITLKHYLNEKEAIEKIPTLHMMTLDLKEIKERANRLYKNLERLNKFYKFSIEEGESTVGGGSMPDSKLSTYLLRIDSDSINEVNLERELREYKIPIITRVYKGAVYIDLRTILEDDYEVIFNALKEIGEK.

Lys292 bears the N6-(pyridoxal phosphate)lysine mark.

Belongs to the SelA family. Requires pyridoxal 5'-phosphate as cofactor.

It localises to the cytoplasm. The catalysed reaction is L-seryl-tRNA(Sec) + selenophosphate + H(+) = L-selenocysteinyl-tRNA(Sec) + phosphate. Its pathway is aminoacyl-tRNA biosynthesis; selenocysteinyl-tRNA(Sec) biosynthesis; selenocysteinyl-tRNA(Sec) from L-seryl-tRNA(Sec) (bacterial route): step 1/1. Functionally, converts seryl-tRNA(Sec) to selenocysteinyl-tRNA(Sec) required for selenoprotein biosynthesis. This chain is L-seryl-tRNA(Sec) selenium transferase, found in Clostridium perfringens (strain ATCC 13124 / DSM 756 / JCM 1290 / NCIMB 6125 / NCTC 8237 / Type A).